The chain runs to 240 residues: UDP-2,3-diacylglucosamine hydrolase (240 aa).

The Mn(2+) site is built by Asp8, His10, Asp41, Asn79, and His114. Substrate is bound at residue 79–80 (NR). Positions 122, 160, 164, 167, and 195 each coordinate substrate. Residues His195 and His197 each coordinate Mn(2+).

This sequence belongs to the LpxH family. Requires Mn(2+) as cofactor.

The protein resides in the cell inner membrane. It carries out the reaction UDP-2-N,3-O-bis[(3R)-3-hydroxytetradecanoyl]-alpha-D-glucosamine + H2O = 2-N,3-O-bis[(3R)-3-hydroxytetradecanoyl]-alpha-D-glucosaminyl 1-phosphate + UMP + 2 H(+). It functions in the pathway glycolipid biosynthesis; lipid IV(A) biosynthesis; lipid IV(A) from (3R)-3-hydroxytetradecanoyl-[acyl-carrier-protein] and UDP-N-acetyl-alpha-D-glucosamine: step 4/6. In terms of biological role, hydrolyzes the pyrophosphate bond of UDP-2,3-diacylglucosamine to yield 2,3-diacylglucosamine 1-phosphate (lipid X) and UMP by catalyzing the attack of water at the alpha-P atom. Involved in the biosynthesis of lipid A, a phosphorylated glycolipid that anchors the lipopolysaccharide to the outer membrane of the cell. In Salmonella agona (strain SL483), this protein is UDP-2,3-diacylglucosamine hydrolase.